We begin with the raw amino-acid sequence, 182 residues long: Isopentenyl-diphosphate Delta-isomerase (182 aa).

Mn(2+) contacts are provided by H23 and H30. The 135-residue stretch at 28–162 (PRHLAFSCHV…PWAFSPWLVE (135 aa)) folds into the Nudix hydrolase domain. C65 is a catalytic residue. C65 lines the Mg(2+) pocket. H67 provides a ligand contact to Mn(2+). E85 contacts Mg(2+). Mn(2+) contacts are provided by E112 and E114. E114 is a catalytic residue.

The protein belongs to the IPP isomerase type 1 family. Mg(2+) is required as a cofactor. Mn(2+) serves as cofactor.

The protein resides in the cytoplasm. It carries out the reaction isopentenyl diphosphate = dimethylallyl diphosphate. It participates in isoprenoid biosynthesis; dimethylallyl diphosphate biosynthesis; dimethylallyl diphosphate from isopentenyl diphosphate: step 1/1. Its function is as follows. Catalyzes the 1,3-allylic rearrangement of the homoallylic substrate isopentenyl (IPP) to its highly electrophilic allylic isomer, dimethylallyl diphosphate (DMAPP). This is Isopentenyl-diphosphate Delta-isomerase from Brevibacterium linens.